The primary structure comprises 460 residues: Bifunctional protein GlmU (460 aa).

Residues 1–229 (MTNYAIILAA…FNESLGVNDR (229 aa)) are pyrophosphorylase. UDP-N-acetyl-alpha-D-glucosamine-binding positions include 8–11 (LAAG), K22, Q72, and 77–78 (GT). Mg(2+) is bound at residue D102. Residues G139, E154, N169, and N227 each coordinate UDP-N-acetyl-alpha-D-glucosamine. N227 provides a ligand contact to Mg(2+). The segment at 230–250 (VALATAETVMRQRITQKHMVN) is linker. The segment at 251–460 (GVTFQNPETV…RLAHHPSRSK (210 aa)) is N-acetyltransferase. 2 residues coordinate UDP-N-acetyl-alpha-D-glucosamine: R332 and K350. Catalysis depends on H362, which acts as the Proton acceptor. The UDP-N-acetyl-alpha-D-glucosamine site is built by Y365 and N376. Residues A379, 385 to 386 (NY), S404, A422, and R439 each bind acetyl-CoA.

In the N-terminal section; belongs to the N-acetylglucosamine-1-phosphate uridyltransferase family. This sequence in the C-terminal section; belongs to the transferase hexapeptide repeat family. Homotrimer. Mg(2+) is required as a cofactor.

Its subcellular location is the cytoplasm. It catalyses the reaction alpha-D-glucosamine 1-phosphate + acetyl-CoA = N-acetyl-alpha-D-glucosamine 1-phosphate + CoA + H(+). It carries out the reaction N-acetyl-alpha-D-glucosamine 1-phosphate + UTP + H(+) = UDP-N-acetyl-alpha-D-glucosamine + diphosphate. The protein operates within nucleotide-sugar biosynthesis; UDP-N-acetyl-alpha-D-glucosamine biosynthesis; N-acetyl-alpha-D-glucosamine 1-phosphate from alpha-D-glucosamine 6-phosphate (route II): step 2/2. It functions in the pathway nucleotide-sugar biosynthesis; UDP-N-acetyl-alpha-D-glucosamine biosynthesis; UDP-N-acetyl-alpha-D-glucosamine from N-acetyl-alpha-D-glucosamine 1-phosphate: step 1/1. It participates in bacterial outer membrane biogenesis; LPS lipid A biosynthesis. Its function is as follows. Catalyzes the last two sequential reactions in the de novo biosynthetic pathway for UDP-N-acetylglucosamine (UDP-GlcNAc). The C-terminal domain catalyzes the transfer of acetyl group from acetyl coenzyme A to glucosamine-1-phosphate (GlcN-1-P) to produce N-acetylglucosamine-1-phosphate (GlcNAc-1-P), which is converted into UDP-GlcNAc by the transfer of uridine 5-monophosphate (from uridine 5-triphosphate), a reaction catalyzed by the N-terminal domain. The sequence is that of Bifunctional protein GlmU from Streptococcus pyogenes serotype M28 (strain MGAS6180).